A 245-amino-acid polypeptide reads, in one-letter code: 1-(5-phosphoribosyl)-5-[(5-phosphoribosylamino)methylideneamino] imidazole-4-carboxamide isomerase (245 aa).

Catalysis depends on Asp-13, which acts as the Proton acceptor. Residue Asp-132 is the Proton donor of the active site.

It belongs to the HisA/HisF family.

The protein resides in the cytoplasm. It catalyses the reaction 1-(5-phospho-beta-D-ribosyl)-5-[(5-phospho-beta-D-ribosylamino)methylideneamino]imidazole-4-carboxamide = 5-[(5-phospho-1-deoxy-D-ribulos-1-ylimino)methylamino]-1-(5-phospho-beta-D-ribosyl)imidazole-4-carboxamide. It functions in the pathway amino-acid biosynthesis; L-histidine biosynthesis; L-histidine from 5-phospho-alpha-D-ribose 1-diphosphate: step 4/9. In Frankia alni (strain DSM 45986 / CECT 9034 / ACN14a), this protein is 1-(5-phosphoribosyl)-5-[(5-phosphoribosylamino)methylideneamino] imidazole-4-carboxamide isomerase.